The sequence spans 264 residues: Thymidylate synthase (264 aa).

Residue Arg21 participates in dUMP binding. Position 51 (His51) interacts with (6R)-5,10-methylene-5,6,7,8-tetrahydrofolate. Residue 126 to 127 coordinates dUMP; sequence RR. Cys146 (nucleophile) is an active-site residue. DUMP-binding positions include 166–169, Asn177, and 207–209; these read RSCD and HLY. Asp169 is a (6R)-5,10-methylene-5,6,7,8-tetrahydrofolate binding site. Residue Ala263 participates in (6R)-5,10-methylene-5,6,7,8-tetrahydrofolate binding.

The protein belongs to the thymidylate synthase family. Bacterial-type ThyA subfamily. As to quaternary structure, homodimer.

The protein resides in the cytoplasm. The catalysed reaction is dUMP + (6R)-5,10-methylene-5,6,7,8-tetrahydrofolate = 7,8-dihydrofolate + dTMP. It functions in the pathway pyrimidine metabolism; dTTP biosynthesis. In terms of biological role, catalyzes the reductive methylation of 2'-deoxyuridine-5'-monophosphate (dUMP) to 2'-deoxythymidine-5'-monophosphate (dTMP) while utilizing 5,10-methylenetetrahydrofolate (mTHF) as the methyl donor and reductant in the reaction, yielding dihydrofolate (DHF) as a by-product. This enzymatic reaction provides an intracellular de novo source of dTMP, an essential precursor for DNA biosynthesis. The chain is Thymidylate synthase from Photorhabdus laumondii subsp. laumondii (strain DSM 15139 / CIP 105565 / TT01) (Photorhabdus luminescens subsp. laumondii).